The chain runs to 130 residues: Small ribosomal subunit protein uS9 (130 aa).

The protein belongs to the universal ribosomal protein uS9 family.

The polypeptide is Small ribosomal subunit protein uS9 (rpsI) (Geobacillus stearothermophilus (Bacillus stearothermophilus)).